The following is a 1385-amino-acid chain: DNA-directed RNA polymerase subunit beta' (1385 aa).

Residues C75, C77, C90, and C93 each contribute to the Zn(2+) site. D466, D468, and D470 together coordinate Mg(2+). C809, C883, C890, and C893 together coordinate Zn(2+).

This sequence belongs to the RNA polymerase beta' chain family. The RNAP catalytic core consists of 2 alpha, 1 beta, 1 beta' and 1 omega subunit. When a sigma factor is associated with the core the holoenzyme is formed, which can initiate transcription. Requires Mg(2+) as cofactor. Zn(2+) is required as a cofactor.

It catalyses the reaction RNA(n) + a ribonucleoside 5'-triphosphate = RNA(n+1) + diphosphate. DNA-dependent RNA polymerase catalyzes the transcription of DNA into RNA using the four ribonucleoside triphosphates as substrates. This is DNA-directed RNA polymerase subunit beta' from Nitratidesulfovibrio vulgaris (strain ATCC 29579 / DSM 644 / CCUG 34227 / NCIMB 8303 / VKM B-1760 / Hildenborough) (Desulfovibrio vulgaris).